A 206-amino-acid chain; its full sequence is Glycerol-3-phosphate acyltransferase (206 aa).

5 helical membrane-spanning segments follow: residues 14-34, 67-87, 91-111, 124-144, and 148-168; these read IALAAAVIGYLFGSIPFGLIL, ATLLLDALKASAAAWIVGYFL, AAIIAGFFAFIGHLFPVWIGF, LLGVAPIMVVLFAAVWLAVAF, and YSSLSALVAMLVIPVALLILG.

The protein belongs to the PlsY family. Probably interacts with PlsX.

The protein localises to the cell inner membrane. It catalyses the reaction an acyl phosphate + sn-glycerol 3-phosphate = a 1-acyl-sn-glycero-3-phosphate + phosphate. The protein operates within lipid metabolism; phospholipid metabolism. In terms of biological role, catalyzes the transfer of an acyl group from acyl-phosphate (acyl-PO(4)) to glycerol-3-phosphate (G3P) to form lysophosphatidic acid (LPA). This enzyme utilizes acyl-phosphate as fatty acyl donor, but not acyl-CoA or acyl-ACP. This chain is Glycerol-3-phosphate acyltransferase, found in Rhizobium etli (strain CIAT 652).